The chain runs to 137 residues: Pro-corazonin (137 aa).

An N-terminal signal peptide occupies residues 1–20 (MKHVFSTSLIVSLFVIFTDA). Gln21 bears the Pyrrolidone carboxylic acid mark. An Asparagine amide modification is found at Asn31. The propeptide occupies 68 to 137 (FLKSPCDVRL…RLLNDGMHRL (70 aa)).

The protein belongs to the corazonin family.

It localises to the secreted. In terms of biological role, cardioactive peptide. Corazonin is probably involved in the physiological regulation of the heart beat. This is Pro-corazonin from Aedes aegypti (Yellowfever mosquito).